Reading from the N-terminus, the 188-residue chain is Adenine phosphoribosyltransferase (188 aa).

This sequence belongs to the purine/pyrimidine phosphoribosyltransferase family. Homodimer.

It is found in the cytoplasm. The enzyme catalyses AMP + diphosphate = 5-phospho-alpha-D-ribose 1-diphosphate + adenine. Its pathway is purine metabolism; AMP biosynthesis via salvage pathway; AMP from adenine: step 1/1. Its function is as follows. Catalyzes a salvage reaction resulting in the formation of AMP, that is energically less costly than de novo synthesis. The chain is Adenine phosphoribosyltransferase from Neisseria meningitidis serogroup C (strain 053442).